We begin with the raw amino-acid sequence, 225 residues long: Small ribosomal subunit protein uS3 (225 aa).

The region spanning 38–106 (IRRFLQKKFK…PIGMNIIEVK (69 aa)) is the KH type-2 domain.

The protein belongs to the universal ribosomal protein uS3 family. Part of the 30S ribosomal subunit. Forms a tight complex with proteins S10 and S14.

Its function is as follows. Binds the lower part of the 30S subunit head. Binds mRNA in the 70S ribosome, positioning it for translation. This Leptospira biflexa serovar Patoc (strain Patoc 1 / Ames) protein is Small ribosomal subunit protein uS3.